The primary structure comprises 278 residues: Cyclin-C (278 aa).

The Cyclin N-terminal domain maps to 41 to 139; sequence NVIQALGEHL…ILECEFYLLE (99 aa). Residues 247–278 form a disordered region; it reads TILSKMPKPKPPPNSEGEQGPNGSQNSSYSQS. Residues 267–278 show a composition bias toward polar residues; sequence PNGSQNSSYSQS. The residue at position 270 (serine 270) is a Phosphoserine.

The protein belongs to the cyclin family. Cyclin C subfamily. In terms of assembly, component of the Mediator complex, which is composed of MED1, MED4, MED6, MED7, MED8, MED9, MED10, MED11, MED12, MED13, MED13L, MED14, MED15, MED16, MED17, MED18, MED19, MED20, MED21, MED22, MED23, MED24, MED25, MED26, MED27, MED29, MED30, MED31, CCNC, CDK8 and CDC2L6/CDK11. The MED12, MED13, CCNC and CDK8 subunits form a distinct module termed the CDK8 module. Mediator containing the CDK8 module is less active than Mediator lacking this module in supporting transcriptional activation. Individual preparations of the Mediator complex lacking one or more distinct subunits have been variously termed ARC, CRSP, DRIP, PC2, SMCC and TRAP. The cylin/CDK pair formed by CCNC/CDK8 also associates with the large subunit of RNA polymerase II.

The protein localises to the nucleus. Component of the Mediator complex, a coactivator involved in regulated gene transcription of nearly all RNA polymerase II-dependent genes. Mediator functions as a bridge to convey information from gene-specific regulatory proteins to the basal RNA polymerase II transcription machinery. Mediator is recruited to promoters by direct interactions with regulatory proteins and serves as a scaffold for the assembly of a functional preinitiation complex with RNA polymerase II and the general transcription factors. Binds to and activates cyclin-dependent kinase CDK8 that phosphorylates the CTD (C-terminal domain) of the large subunit of RNA polymerase II (RNAp II), which may inhibit the formation of a transcription initiation complex. The chain is Cyclin-C (Ccnc) from Rattus norvegicus (Rat).